Consider the following 368-residue polypeptide: MSHMELALDPGDHDLLGFLLEESGGLGAAPDEALTSPPDWELPLSESLSDWDVEDFLSCLPSPPAVLNVFSNSDPCLVQHDHTYSLSQEHVSIDLDNESYEKERAQMTPLRVEEPADQEIARLILTEEEKRLLEKEGLTLPGMLPLTKMEEQVLKRVRRKIRNKKSAQESRRKKKVYVGGLESRVLKYTAQNLELQNKVQLLEEQNLSLLDQLRRLQAMVIQTANKASSSSTCVLVLLFSFCLLLVPAMYSSDTRGSLPAEHRVLSRQLRALPSEDPPQLEPPALQSEVPKDSLNPELQAASNSCCLFHLMPQAPRAEPPLQLPLPDGFSGCSCPDSISPLHANLTREEGWLPTPSPTSVILQGRYSG.

Residues 1 to 95 (MSHMELALDP…LSQEHVSIDL (95 aa)) form a transcription activation (acidic) region. Over 1-229 (MSHMELALDP…VIQTANKASS (229 aa)) the chain is Cytoplasmic. 2 consecutive short sequence motifs (LXXLL motif) follow at residues 16–20 (LGFLL) and 57–61 (LSCLP). The HCFC1-binding-motif (HBM) motif lies at 81-84 (DHTY). The 64-residue stretch at 153–216 (VLKRVRRKIR…LSLLDQLRRL (64 aa)) folds into the bZIP domain. The segment at 155–184 (KRVRRKIRNKKSAQESRRKKKVYVGGLESR) is basic motif. The leucine-zipper stretch occupies residues 186 to 193 (LKYTAQNL). The chain crosses the membrane as a helical; Signal-anchor for type II membrane protein span at residues 230–250 (SSTCVLVLLFSFCLLLVPAMY). Topologically, residues 251–368 (SSDTRGSLPA…SVILQGRYSG (118 aa)) are lumenal. The N-linked (GlcNAc...) asparagine glycan is linked to Asn344.

It belongs to the bZIP family. ATF subfamily. Homodimer. Interacts with HCFC1; the interaction is required to stimulate CREB3 transcriptional activity. Interacts with CREBZF; the interaction occurs only in combination with HCFC1. Interacts (via central part and transmembrane region) with DCSTAMP (via C-terminus cytoplasmic domain). Interacts with OS9. Interacts (via leucine-zipper domain) with CREBRF (via leucine-zipper domain); the interaction occurs only after CREB3 activation and promotes CREB3 degradation. Interacts (via C-terminal domain) with CCR1. Post-translationally, first proteolytically cleaved by site-1 protease (S1P) that generates membrane-associated N-terminus and a luminal C-terminus forms. The membrane-associated N-terminus form is further proteolytically processed probably by the site-2 protease (S2P) through a regulated intramembrane proteolysis (RIP), releasing the transcriptional active processed cyclic AMP-responsive element-binding protein 3 form, which is transported to the nucleus. The proteolytic cleavage is strongly induced during dendritic cell (DC) maturation and inhibited by DCSTAMP. That form is rapidly degraded. In terms of processing, N-glycosylated. As to expression, expressed in trigeminal ganglia (at protein level).

The protein resides in the endoplasmic reticulum membrane. The protein localises to the golgi apparatus. It is found in the nucleus. It localises to the cytoplasm. In terms of biological role, endoplasmic reticulum (ER)-bound sequence-specific transcription factor that directly binds DNA and activates transcription. Plays a role in the unfolded protein response (UPR), promoting cell survival versus ER stress-induced apoptotic cell death. Also involved in cell proliferation, migration and differentiation, tumor suppression and inflammatory gene expression. Acts as a positive regulator of LKN-1/CCL15-induced chemotaxis signaling of leukocyte cell migration. Associates with chromatin to the HERPUD1 promoter. Also induces transcriptional activation of chemokine receptors. Functions as a negative transcriptional regulator in ligand-induced transcriptional activation of the glucocorticoid receptor NR3C1 by recruiting and activating histone deacetylases (HDAC1, HDAC2 and HDAC6). Also decreases the acetylation level of histone H4. Does not promote the chemotactic activity of leukocyte cells. Functionally, this is the transcriptionally active form that translocates to the nucleus and activates unfolded protein response (UPR) target genes during endoplasmic reticulum (ER) stress response. Binds the cAMP response element (CRE) (consensus: 5'-GTGACGT[AG][AG]-3') and C/EBP sequences present in many promoters to activate transcription of the genes. Binds to the unfolded protein response element (UPRE) consensus sequences sites. Binds DNA to the 5'-CCAC[GA]-3'half of ERSE II (5'-ATTGG-N-CCACG-3'). The sequence is that of Cyclic AMP-responsive element-binding protein 3 (CREB3) from Bos taurus (Bovine).